Consider the following 165-residue polypeptide: 2S seed storage protein 5 (165 aa).

Positions 1 to 20 (MAKLILVFATLALFILLANA) are cleaved as a signal peptide. Propeptides lie at residues 21–37 (SIYRTVVEFEEDDDVSN) and 71–89 (YEADDFELTLDVDLEDDEN).

Belongs to the 2S seed storage albumins family. In terms of assembly, the mature protein consists of a small and a large chain linked by disulfide bonds.

In terms of biological role, this is a 2S seed storage protein. The protein is 2S seed storage protein 5 (SESA5) of Arabidopsis thaliana (Mouse-ear cress).